Consider the following 284-residue polypeptide: Ribosomal RNA small subunit methyltransferase A (284 aa).

S-adenosyl-L-methionine is bound by residues N12, L14, G38, E59, D81, and N106.

The protein belongs to the class I-like SAM-binding methyltransferase superfamily. rRNA adenine N(6)-methyltransferase family. RsmA subfamily.

It is found in the cytoplasm. It catalyses the reaction adenosine(1518)/adenosine(1519) in 16S rRNA + 4 S-adenosyl-L-methionine = N(6)-dimethyladenosine(1518)/N(6)-dimethyladenosine(1519) in 16S rRNA + 4 S-adenosyl-L-homocysteine + 4 H(+). Specifically dimethylates two adjacent adenosines (A1518 and A1519) in the loop of a conserved hairpin near the 3'-end of 16S rRNA in the 30S particle. May play a critical role in biogenesis of 30S subunits. This chain is Ribosomal RNA small subunit methyltransferase A, found in Phytoplasma australiense.